The chain runs to 1366 residues: Collagen alpha-2(I) chain (1366 aa).

The first 22 residues, 1 to 22 (MLSFVDTRTLLLLAVTLCLATC), serve as a signal peptide directing secretion. Pyrrolidone carboxylic acid is present on Q23. A propeptide spans 23 to 79 (QSLQEETVRKGPAGDRGPRGERGPPGPPGRDGEDGPTGPPGPPGPPGPPGLGGNFAA) (N-terminal propeptide). Over residues 28-44 (ETVRKGPAGDRGPRGER) the composition is skewed to basic and acidic residues. A disordered region spans residues 28–1130 (ETVRKGPAGD…QPRSAPSLRP (1103 aa)). 4-hydroxyproline occurs at positions 47, 50, 62, 65, 68, and 71. The span at 59 to 71 (TGPPGPPGPPGPP) shows a compositional bias: pro residues. Q80 carries the post-translational modification Pyrrolidone carboxylic acid. K84 is subject to Allysine. Positions 84 to 94 (KGVGLGPGPMG) are enriched in gly residues. Residues 95–140 (LMGPRGPPGAAGAPGPQGFQGPAGEPGEPGQTGPAGARGPAGPPGK) show a composition bias toward low complexity. 2 positions are modified to 4-hydroxyproline: P102 and P108. Residues 141-155 (AGEDGHPGKPGRPGE) are compositionally biased toward basic and acidic residues. K177 is subject to 5-hydroxylysine; alternate. K177 carries an O-linked (Gal...) hydroxylysine; alternate glycan. Composition is skewed to low complexity over residues 225 to 254 (VGAP…SAGP), 269 to 293 (AVGN…LSGP), 300 to 321 (PGAN…AGAP), 330 to 345 (PGPV…RGLV), 398 to 410 (LRGS…LPGA), and 419 to 434 (PPGS…VRGP). 3 positions are modified to 4-hydroxyproline: P420, P441, and P444. 2 stretches are compositionally biased toward low complexity: residues 470-489 (LPGI…RGEP) and 513-531 (AGLA…NGAQ). Gly residues predominate over residues 538-547 (GVQGGKGEQG). Low complexity-rich tracts occupy residues 594-611 (PGES…SRGP), 623-648 (EPGV…RGAA), 663-710 (RGEI…PRGS), and 717-737 (VGPA…QPGA). Residues 738–747 (KGERGAKGPK) show a composition bias toward basic and acidic residues. A compositionally biased stretch (low complexity) spans 752-765 (VVGPTGPVGAAGPA). Positions 775-784 (GSRGDGGPPG) are enriched in gly residues. Low complexity-rich tracts occupy residues 786–795 (TGFPGAAGRT), 849–876 (SGEA…LGLP), 884–932 (LPGV…NPGN), 956–974 (PVGA…PAGK), and 983–1001 (PSGP…PSGP). Residues 1005 to 1016 (RGDKGEPGEKGP) are compositionally biased toward basic and acidic residues. Residues 1089 to 1101 (AGPPGPPGPPGPP) are compositionally biased toward pro residues. A propeptide spans 1120-1366 (DQPRSAPSLR…FVDIGPVCFK (247 aa)) (C-terminal propeptide). The Fibrillar collagen NC1 domain maps to 1133-1366 (YEVDATLKSL…FVDIGPVCFK (234 aa)). Intrachain disulfides connect C1163/C1195, C1203/C1364, and C1272/C1317. Residues D1181, N1183, Q1184, C1186, and D1189 each contribute to the Ca(2+) site. N-linked (GlcNAc...) asparagine glycosylation is present at N1267.

Belongs to the fibrillar collagen family. As to quaternary structure, trimers of one alpha 2(I) and two alpha 1(I) chains. Interacts (via C-terminus) with TMEM131 (via PapD-L domain); the interaction is direct and is involved in assembly and TRAPPIII ER-to-Golgi transport complex-dependent secretion of collagen. Prolines at the third position of the tripeptide repeating unit (G-X-Y) are hydroxylated in some or all of the chains. Forms the fibrils of tendon, ligaments and bones. In bones the fibrils are mineralized with calcium hydroxyapatite.

It localises to the secreted. The protein resides in the extracellular space. The protein localises to the extracellular matrix. Type I collagen is a member of group I collagen (fibrillar forming collagen). This is Collagen alpha-2(I) chain (COL1A2) from Homo sapiens (Human).